The sequence spans 1058 residues: Receptor-type guanylate cyclase gcy-22 (1058 aa).

The first 23 residues, methionine 1 to serine 23, serve as a signal peptide directing secretion. Residues valine 25–alanine 470 are Extracellular-facing. 9 N-linked (GlcNAc...) asparagine glycosylation sites follow: asparagine 36, asparagine 73, asparagine 201, asparagine 215, asparagine 277, asparagine 302, asparagine 324, asparagine 350, and asparagine 386. The helical transmembrane segment at isoleucine 471 to valine 491 threads the bilayer. At phenylalanine 492 to isoleucine 1058 the chain is on the cytoplasmic side. The Protein kinase domain occupies glutamate 501 to asparagine 809. Positions leucine 811–leucine 840 form a coiled coil. The Guanylate cyclase domain occupies threonine 867–glutamate 997.

It belongs to the adenylyl cyclase class-4/guanylyl cyclase family. As to expression, expression in ASER neuron begins at an early larval stage and is maintained in the adult.

The protein localises to the cell membrane. The enzyme catalyses GTP = 3',5'-cyclic GMP + diphosphate. Its function is as follows. Guanylate cyclase involved in the production of the second messenger cGMP. Regulates chemotaxis responses toward Li(1-), Mg(2+), Cl(1-), Br(1)- and I(1-) salt ions and methionine in ASE right (ASER) sensory neuron. May regulate ASER neuronal activity such as axon sprouting and calcium responses to changes in salt concentrations. This chain is Receptor-type guanylate cyclase gcy-22, found in Caenorhabditis elegans.